A 338-amino-acid polypeptide reads, in one-letter code: Phenylalanine--tRNA ligase alpha subunit (338 aa).

Position 253 (Glu253) interacts with Mg(2+).

It belongs to the class-II aminoacyl-tRNA synthetase family. Phe-tRNA synthetase alpha subunit type 1 subfamily. Tetramer of two alpha and two beta subunits. Requires Mg(2+) as cofactor.

The protein localises to the cytoplasm. It catalyses the reaction tRNA(Phe) + L-phenylalanine + ATP = L-phenylalanyl-tRNA(Phe) + AMP + diphosphate + H(+). The sequence is that of Phenylalanine--tRNA ligase alpha subunit from Legionella pneumophila (strain Paris).